We begin with the raw amino-acid sequence, 362 residues long: Abnormal cell migration protein 13 (362 aa).

Positions 1 to 20 (MTKLLIALILFSICWKPYSA) are cleaved as a signal peptide. Over 21–237 (EPIASFFDGL…ELDPLTTVSG (217 aa)) the chain is Extracellular. Disulfide bonds link Cys-36–Cys-68 and Cys-98–Cys-136. In terms of domain architecture, CUB spans 36-175 (CKARLDRRLT…KGFKLHWGSF (140 aa)). The N-linked (GlcNAc...) asparagine glycan is linked to Asn-63. Asn-145 and Asn-161 each carry an N-linked (GlcNAc...) asparagine glycan. The region spanning 182–225 (NCVTGEFSCGNGECIPIESACDRFADCSNGEDLIHSRQMAANCQ) is the LDL-receptor class A domain. Intrachain disulfides connect Cys-183–Cys-195, Cys-190–Cys-208, and Cys-202–Cys-224. Residues 238–258 (VFVLLFSATIILSLCGFIMFV) traverse the membrane as a helical segment. Topologically, residues 259 to 362 (CCLCKCLKST…VRNDVHRNLL (104 aa)) are cytoplasmic. The disordered stretch occupies residues 275–311 (SSHTTTTTATDYKPDPPQFYPPSPPKMPPPSAASSYT). The span at 289–305 (DPPQFYPPSPPKMPPPS) shows a compositional bias: pro residues.

Interacts with abl-1 (via SH2 and SH3 domains); the interaction is direct. Interacts with sem-5; the interaction is direct. As to expression, expressed in pharyngeal-intestinal valve cells and ventral cord neurons.

Its subcellular location is the cell membrane. It localises to the perikaryon. It is found in the cell projection. The protein localises to the axon. The protein resides in the dendrite. Its function is as follows. Probable receptor that acts as an upstream signaling protein to promote the guidance, migration and positioning of the right Q neuroblast (QR) and its descendants along the anteroposterior body axis, and also the anterior migration of BDU interneurons during larval development. Associates with and recruits the downstream components tyrosine kinase abl-1 and the tyrosine kinase adapter protein sem-5 to the leading edge of migrating Q neuroblasts and their descendants to activate signaling through the two parallel wve-1 and wsp-1 pathways, respectively, and direct migration along the anteroposterior body axis. Involved in cytoskeleton dynamics regulating the organization of the actin cytoskeleton at the leading edge of migrating cells to ensure correct Q cell polarity and promote migration. Role in cytoskeleton organization may be by activation of the wve-1 and wsp-1 pathways which recruit the Arp2/3 complex to the leading edge of migrating cells. Plays a role in regulating the asymmetric distribution of the actin cytoskeleton-binding protein cor-1 in Q neuroblasts which is required for the anterior migration of QR neuroblasts. The chain is Abnormal cell migration protein 13 from Caenorhabditis elegans.